We begin with the raw amino-acid sequence, 415 residues long: Fructose-like permease IIC component 1 (415 aa).

The Cytoplasmic portion of the chain corresponds to 1 to 46 (MAIKKRSATVVPGASGAAAAVKNPQASKTSFWGELPQHVMSGISRM). The PTS EIIC type-2 domain maps to 35-410 (LPQHVMSGIS…RLMMFRKGKL (376 aa)). The helical transmembrane segment at 47 to 67 (VPTLIMGGVILAFSQLIAYSW) threads the bilayer. Residues 68 to 101 (LKIPAEIGIMDALNSGKFSGFDLSLLKFAWLSQS) are Periplasmic-facing. Residues 102-122 (FGGVLFGFAIPMFAAFVANSI) form a helical membrane-spanning segment. The Cytoplasmic portion of the chain corresponds to 123-126 (GGKL). Residues 127 to 147 (AFPAGFIGGLMSTQPTQLLNF) traverse the membrane as a helical segment. Residues 148–157 (DPSTMQWATS) lie on the Periplasmic side of the membrane. Residues 158 to 178 (SPVPSTFIGALIISIVAGYLV) traverse the membrane as a helical segment. Residues 179–197 (KWMNQKIQLPDFLLAFKTT) are Cytoplasmic-facing. Residues 198 to 218 (FLLPILSAIFVMLAMYYVITP) form a helical membrane-spanning segment. At 219-237 (FGGWINGGIRTVLTAAGEK) the chain is on the periplasmic side. Residues 238-258 (GALMYAMGIAAATAIDLGGPI) traverse the membrane as a helical segment. The Cytoplasmic portion of the chain corresponds to 259-276 (NKAAGFVAFSFTTDHVLP). The chain crosses the membrane as a helical span at residues 277–297 (VTARSIAIVIPPIGLGLATII). The Periplasmic segment spans residues 298 to 318 (DRRLTGKRLFNAQLYPQGKTA). Residues 319–339 (MFLAFMGISEGAIPFALESPI) traverse the membrane as a helical segment. The Cytoplasmic segment spans residues 340–341 (TA). Residues 342 to 362 (IPSYMVGAIVGSTAAVWLGAV) traverse the membrane as a helical segment. Over 363–378 (QWFPESAIWAWPLVTN) the chain is Periplasmic. A helical transmembrane segment spans residues 379 to 399 (LGVYMAGIALGAVITALMVVF). At 400 to 415 (LRLMMFRKGKLLIDSL) the chain is on the cytoplasmic side.

The protein localises to the cell inner membrane. Its function is as follows. The phosphoenolpyruvate-dependent sugar phosphotransferase system (PTS), a major carbohydrate active -transport system, catalyzes the phosphorylation of incoming sugar substrates concomitant with their translocation across the cell membrane. This chain is Fructose-like permease IIC component 1 (fryC), found in Escherichia coli (strain K12).